Reading from the N-terminus, the 117-residue chain is Snaclec CHH-B subunit beta (117 aa).

Disulfide bonds link C2–C13, C30–C115, and C92–C107. The region spanning 9 to 116 (YEGHCYRVFQ…CSKTHNVVCK (108 aa)) is the C-type lectin domain.

It belongs to the snaclec family. As to quaternary structure, heterodimer of subunits alpha and beta; disulfide-linked. Expressed by the venom gland.

Its subcellular location is the secreted. Its function is as follows. Binds to the subunit GPIbalpha (GP1BA) of the platelet GPIb/V/IX receptor system. It inhibits ristocetin- and vWF-induced platelet aggregation in platelet-rich plasma by inhibiting the binding of vWF to GPIbalpha. This is Snaclec CHH-B subunit beta from Crotalus horridus (Timber rattlesnake).